The primary structure comprises 259 residues: DNA-directed RNA polymerase subunit Rpo3 (259 aa).

Belongs to the archaeal Rpo3/eukaryotic RPB3 RNA polymerase subunit family. Part of the RNA polymerase complex.

The protein localises to the cytoplasm. The enzyme catalyses RNA(n) + a ribonucleoside 5'-triphosphate = RNA(n+1) + diphosphate. In terms of biological role, DNA-dependent RNA polymerase (RNAP) catalyzes the transcription of DNA into RNA using the four ribonucleoside triphosphates as substrates. The protein is DNA-directed RNA polymerase subunit Rpo3 of Pyrococcus horikoshii (strain ATCC 700860 / DSM 12428 / JCM 9974 / NBRC 100139 / OT-3).